The primary structure comprises 1158 residues: Teashirt homolog 1 (1158 aa).

Disordered stretches follow at residues 70–126, 170–228, and 310–341; these read DDGR…DMDT, INST…ANNG, and TGHYRDDNKDKEEDRGKKWSKPRKRSLMEMEG. Residues 76-88 show a composition bias toward polar residues; that stretch reads LSYQNSPLSNGTN. Composition is skewed to low complexity over residues 186–205 and 213–228; these read SHASTIASSGASSSSNASAS and SSNSTKATTLTNANNG. 2 C2H2-type zinc fingers span residues 288 to 312 and 349 to 373; these read FRCKDCSAAYDTLVGLTVHMNETGH and LKCMYCGHSFESLQDLSVHMIKTKH. A compositionally biased stretch (basic and acidic residues) spans 310–326; it reads TGHYRDDNKDKEEDRGK. The segment at 405-425 is disordered; the sequence is PCSPDSISSTPGIPLAETAPT. A C2H2-type 3 zinc finger spans residues 461–485; that stretch reads LKCMECGSSHDTLQQLTAHMMVTGH. Disordered stretches follow at residues 516-573, 656-681, and 693-748; these read PPTT…VEKS, LKSLTSDSSTLIHSPSSPSPPPNHKS, and VTGK…VDKD. Positions 555 to 573 are enriched in basic and acidic residues; sequence EEKKIKQEKEDPSERVEKS. The span at 656–671 shows a compositional bias: low complexity; the sequence is LKSLTSDSSTLIHSPS. Composition is skewed to basic and acidic residues over residues 693 to 716 and 724 to 748; these read VTGKIPSKKDRDEKLTERNSKHLT and LKERKDLPKPDDLTKPTKNGTVDKD. Positions 963 to 1033 form a DNA-binding region, homeobox; it reads RKGRQSNWNP…NVKYQLRRTG (71 aa). C2H2-type zinc fingers lie at residues 1048-1070 and 1115-1138; these read FLCSDCASQFRTPSTYINHLESH and FQCKLCNRTFVSKHAVKLHLSKTH.

The protein belongs to the teashirt C2H2-type zinc-finger protein family.

The protein localises to the nucleus. Functionally, probable transcriptional regulator involved in developmental processes. May act as a transcriptional repressor (Potential). This is Teashirt homolog 1 (tshz1) from Danio rerio (Zebrafish).